The following is a 167-amino-acid chain: Signal peptidase complex subunit 3A (167 aa).

Residues 1-11 (MHTFGYRANAL) are Cytoplasmic-facing. A helical; Signal-anchor for type II membrane protein membrane pass occupies residues 12–32 (LTFAVTALAFICAIASFSDKF). The Lumenal portion of the chain corresponds to 33–167 (SNQNPSAEIQ…PGYSLPDAYR (135 aa)). The N-linked (GlcNAc...) asparagine glycan is linked to asparagine 136.

Belongs to the SPCS3 family. In terms of assembly, component of the signal peptidase complex (SPC) composed of a catalytic subunit SEC11 and three accessory subunits SPCS1, SPCS2 and SPCS3. The complex induces a local thinning of the ER membrane which is used to measure the length of the signal peptide (SP) h-region of protein substrates. This ensures the selectivity of the complex towards h-regions shorter than 18-20 amino acids.

Its subcellular location is the endoplasmic reticulum membrane. Essential component of the signal peptidase complex (SPC) which catalyzes the cleavage of N-terminal signal sequences from nascent proteins as they are translocated into the lumen of the endoplasmic reticulum. Essential for the SPC catalytic activity, possibly by stabilizing and positioning the active center of the complex close to the lumenal surface. This Arabidopsis thaliana (Mouse-ear cress) protein is Signal peptidase complex subunit 3A.